The chain runs to 157 residues: Class-10 pathogenesis-related protein 1 (157 aa).

The protein belongs to the BetVI family. As to expression, expressed in roots. Detected in nodules and leaves, but not in stems and flowers.

The chain is Class-10 pathogenesis-related protein 1 (PR10-1) from Medicago truncatula (Barrel medic).